A 486-amino-acid chain; its full sequence is Membrane-bound lytic murein transglycosylase F (486 aa).

The N-terminal stretch at 1–28 (MFAHTLFRKRCAIWLLAIGIFLMLGSCA) is a signal peptide. The non-LT domain stretch occupies residues 29–267 (EKPSELERIK…RLRERYYGHV (239 aa)). The segment at 268 to 486 (DVLGYVGAYA…TDLMEELPPL (219 aa)) is LT domain. The active site involves Glu314.

The protein in the N-terminal section; belongs to the bacterial solute-binding protein 3 family. This sequence in the C-terminal section; belongs to the transglycosylase Slt family.

It is found in the cell outer membrane. The enzyme catalyses Exolytic cleavage of the (1-&gt;4)-beta-glycosidic linkage between N-acetylmuramic acid (MurNAc) and N-acetylglucosamine (GlcNAc) residues in peptidoglycan, from either the reducing or the non-reducing ends of the peptidoglycan chains, with concomitant formation of a 1,6-anhydrobond in the MurNAc residue.. Its function is as follows. Murein-degrading enzyme that degrades murein glycan strands and insoluble, high-molecular weight murein sacculi, with the concomitant formation of a 1,6-anhydromuramoyl product. Lytic transglycosylases (LTs) play an integral role in the metabolism of the peptidoglycan (PG) sacculus. Their lytic action creates space within the PG sacculus to allow for its expansion as well as for the insertion of various structures such as secretion systems and flagella. The chain is Membrane-bound lytic murein transglycosylase F from Stutzerimonas stutzeri (strain A1501) (Pseudomonas stutzeri).